We begin with the raw amino-acid sequence, 496 residues long: Chromosomal replication initiator protein DnaA (496 aa).

The segment at 1–76 is domain I, interacts with DnaA modulators; the sequence is MKMDSAVSEE…TELWQEENPQ (76 aa). Positions 76–150 are domain II; it reads QILKVEVVVR…AAATGAVLGS (75 aa). A domain III, AAA+ region region spans residues 151–373; it reads PLDPRYTFDT…GAFNQLLFRQ (223 aa). Positions 197, 199, 200, and 201 each coordinate ATP. Positions 374-496 are domain IV, binds dsDNA; sequence SFEPNISIDR…LKRLINDQAA (123 aa).

This sequence belongs to the DnaA family. As to quaternary structure, oligomerizes as a right-handed, spiral filament on DNA at oriC.

It localises to the cytoplasm. Its function is as follows. Plays an essential role in the initiation and regulation of chromosomal replication. ATP-DnaA binds to the origin of replication (oriC) to initiate formation of the DNA replication initiation complex once per cell cycle. Binds the DnaA box (a 9 base pair repeat at the origin) and separates the double-stranded (ds)DNA. Forms a right-handed helical filament on oriC DNA; dsDNA binds to the exterior of the filament while single-stranded (ss)DNA is stabiized in the filament's interior. The ATP-DnaA-oriC complex binds and stabilizes one strand of the AT-rich DNA unwinding element (DUE), permitting loading of DNA polymerase. After initiation quickly degrades to an ADP-DnaA complex that is not apt for DNA replication. Binds acidic phospholipids. The protein is Chromosomal replication initiator protein DnaA of Brucella abortus biovar 1 (strain 9-941).